Here is a 339-residue protein sequence, read N- to C-terminus: UDP-glucose 4-epimerase (339 aa).

NAD(+) contacts are provided by residues 12–13, 32–37, 59–60, 81–85, Asn-100, Ser-125, Tyr-150, Lys-154, and Phe-179; these read FI, DNLCNS, DI, and FAGLK. The substrate site is built by Ser-125 and Tyr-150. Tyr-150 acts as the Proton acceptor in catalysis. Substrate-binding positions include Asn-180, 200-201, 217-219, Arg-232, and 293-296; these read NL, AVF, and RAGD.

It belongs to the NAD(P)-dependent epimerase/dehydratase family. Homodimer. It depends on NAD(+) as a cofactor.

It catalyses the reaction UDP-alpha-D-glucose = UDP-alpha-D-galactose. It functions in the pathway carbohydrate metabolism; galactose metabolism. Its function is as follows. Involved in the metabolism of galactose. Plays an essential role in the incorporation of galactose into meningococcal lipopolysaccharide surface molecules, which are important for pathogenesis. Catalyzes the conversion of UDP-galactose (UDP-Gal) to UDP-glucose (UDP-Glc) through a mechanism involving the transient reduction of NAD. This chain is UDP-glucose 4-epimerase (galE), found in Neisseria meningitidis serogroup B (strain ATCC BAA-335 / MC58).